Consider the following 136-residue polypeptide: Large ribosomal subunit protein uL16 (136 aa).

The protein belongs to the universal ribosomal protein uL16 family. As to quaternary structure, part of the 50S ribosomal subunit.

Binds 23S rRNA and is also seen to make contacts with the A and possibly P site tRNAs. This is Large ribosomal subunit protein uL16 from Actinobacillus pleuropneumoniae serotype 5b (strain L20).